A 162-amino-acid chain; its full sequence is CASP-like protein 0U1 (162 aa).

Residues 1–11 (MAAVEAAKTPR) lie on the Cytoplasmic side of the membrane. Residues 12–32 (FILLIIEWVFALVAFAVMGHY) form a helical membrane-spanning segment. Residues 33 to 43 (LFDDRRSSFEY) lie on the Extracellular side of the membrane. A helical membrane pass occupies residues 44–64 (LTAICILVWLVVMIYMVILCC). The Cytoplasmic portion of the chain corresponds to 65–69 (GRALP). Residues 70-90 (PLIEAAIFLLFAILVFIAFLV) form a helical membrane-spanning segment. Residues 91-123 (TAVKCNNSETIVIAGQTISRKVCEGESEPKAAA) lie on the Extracellular side of the membrane. Asn-96 is a glycosylation site (N-linked (GlcNAc...) asparagine). The chain crosses the membrane as a helical span at residues 124-144 (AFAFLLGLLLAGSSVLGCIAF). The Cytoplasmic segment spans residues 145 to 162 (RRPSAPPLSSFQNPTSSV).

The protein belongs to the Casparian strip membrane proteins (CASP) family. In terms of assembly, homodimer and heterodimers.

It localises to the cell membrane. In Chlorokybus atmophyticus (Soil alga), this protein is CASP-like protein 0U1.